Consider the following 582-residue polypeptide: Vacuolar basic amino acid transporter 5 (582 aa).

Topologically, residues 1-44 (MEETKYSSQQEIEGACGSDASLNARGSNDSPMGLSLYLCLASLT) are cytoplasmic. A helical transmembrane segment spans residues 45–65 (LVLFITALDILIVGTIIDVVA). The Vacuolar segment spans residues 66 to 80 (EQFGNYSKTGWLVTG). The N-linked (GlcNAc...) asparagine glycan is linked to Asn-70. Residues 81-101 (YSLPNAILSLIWGRFASIIGF) form a helical membrane-spanning segment. The Cytoplasmic segment spans residues 102–104 (QHS). The chain crosses the membrane as a helical span at residues 105–125 (LILAILIFEAGSLIAALASSM). At 126–132 (NMLIFGR) the chain is on the vacuolar side. A helical transmembrane segment spans residues 133 to 153 (VVAGVGGSGLQTLCFVIGCTM). Residues 154 to 160 (VGERSRP) lie on the Cytoplasmic side of the membrane. The helical transmembrane segment at 161–181 (LVISILSCAFAVAAIVGPIIG) threads the bilayer. At 182-191 (GAFTTHVTWR) the chain is on the vacuolar side. The helical transmembrane segment at 192–212 (WCFYINLPIGGLAIIMFLLTY) threads the bilayer. Residues 213-256 (KAENKGILQQIKDAIGTISSFTFSKFRHQVNFKRLMNGIIFKFD) lie on the Cytoplasmic side of the membrane. The chain crosses the membrane as a helical span at residues 257 to 277 (FFGFALCSAGLVLFLLGLTFG). Topologically, residues 278–287 (GNKYSWNSGQ) are vacuolar. The chain crosses the membrane as a helical span at residues 288–308 (VITYLVLGVLLFIFSLVYDFF). The Cytoplasmic segment spans residues 309–329 (LFDKFNPEPDNISYRPLLLRR). A helical membrane pass occupies residues 330–350 (LVAKPAIIIVNMVTFLLCTGY). The Vacuolar portion of the chain corresponds to 351-372 (NGQMIYSVQFFQLIFASSAWKA). A helical transmembrane segment spans residues 373 to 393 (GLHLIPIVITNVIAAIASGVI). Topologically, residues 394–401 (TKKLGLVK) are cytoplasmic. A helical membrane pass occupies residues 402-422 (PLLIFGGVLGVIGAGLMTLMT). Residue Asn-423 is glycosylated (N-linked (GlcNAc...) asparagine). Residues 423-430 (NTSTKSTQ) are Vacuolar-facing. The helical transmembrane segment at 431–451 (IGVLLLPGFSLGFALQASLMS) threads the bilayer. Topologically, residues 452–469 (AQLQITKDRPEAAMDFIE) are cytoplasmic. Residues 470–492 (VTAFNTFMKSLGTTLGGVLSTTV) traverse the membrane as a helical segment. At 493-539 (FSASFHNKVSRAHLEPYEGKTVDDMILYRLQNYDGSHSTIGNILSDS) the chain is on the vacuolar side. The helical transmembrane segment at 540-560 (IKNVFWMDLGFYALGFLFCSF) threads the bilayer. Over 561–582 (SSNKKLIIPKKDDTPEDNLEDK) the chain is Cytoplasmic.

It belongs to the major facilitator superfamily.

Its subcellular location is the vacuole membrane. Its function is as follows. Transporter required for vacuolar uptake of basic amino acids. The polypeptide is Vacuolar basic amino acid transporter 5 (VBA5) (Saccharomyces cerevisiae (strain ATCC 204508 / S288c) (Baker's yeast)).